The following is a 306-amino-acid chain: Plant-type L-asparaginase (306 aa).

The active-site Nucleophile is the Thr-176. Residues 203–206 and 225–228 contribute to the substrate site; these read RVGD and TGLG.

This sequence belongs to the Ntn-hydrolase family. In terms of assembly, heterotetramer of two alpha and two beta chains arranged as a dimer of alpha/beta heterodimers. The uncleaved protein forms homodimers. Autocleaved. Generates the alpha and beta subunits. The N-terminal residue of the beta subunit is thought to be responsible for the nucleophile hydrolase activity. Predominantly produced in the uncleaved form when gene expression is induced at 37 degrees Celsius with 0.5 mM IPTG. When produced at 42 degrees Celsius without adding IPTG, approximately 90% of the protein is found in the cleaved form, while the remaining 10% is observed as uncleaved precursor. Undergoes complete auto-cleavage within 24 hours at 37 degrees Celsius.

The catalysed reaction is L-asparagine + H2O = L-aspartate + NH4(+). Its activity is regulated as follows. Undergoes auto-cleavage in a temperature-dependent and glycine-independent manner. Metal ions and EDTA do not have any significant effect on enzyme activity, indicating that activity is metal-independent. In terms of biological role, catalyzes the hydrolysis of L-asparagine into L-aspartate and ammonia. Also displays D-asparaginase activity, which is about 10% of the L-asparaginase activity. Does not exhibit glutaminase activity. The sequence is that of Plant-type L-asparaginase from Thermococcus kodakarensis (strain ATCC BAA-918 / JCM 12380 / KOD1) (Pyrococcus kodakaraensis (strain KOD1)).